Here is a 378-residue protein sequence, read N- to C-terminus: Cytochrome b (378 aa).

Transmembrane regions (helical) follow at residues 33-53 (FGSL…FLAM), 77-98 (WLIR…YLHI), 113-133 (WNTG…GYVL), and 178-198 (FFAF…LHFL). Heme b contacts are provided by His83 and His97. Heme b contacts are provided by His182 and His196. Position 201 (His201) interacts with a ubiquinone. A run of 4 helical transmembrane segments spans residues 226–246 (YKDL…AVFS), 288–308 (LGGV…PFLH), 320–340 (WSQL…WIGG), and 347–367 (LTTV…FLMP).

The protein belongs to the cytochrome b family. In terms of assembly, the cytochrome bc1 complex contains 3 respiratory subunits (MT-CYB, CYC1 and UQCRFS1), 2 core proteins (UQCRC1 and UQCRC2) and probably 6 low-molecular weight proteins. Heme b is required as a cofactor.

It is found in the mitochondrion inner membrane. Functionally, component of the ubiquinol-cytochrome c reductase complex (complex III or cytochrome b-c1 complex) that is part of the mitochondrial respiratory chain. The b-c1 complex mediates electron transfer from ubiquinol to cytochrome c. Contributes to the generation of a proton gradient across the mitochondrial membrane that is then used for ATP synthesis. The polypeptide is Cytochrome b (mt-cyb) (Indostomus paradoxus (Armoured stickleback)).